A 102-amino-acid polypeptide reads, in one-letter code: A-type ATP synthase subunit F (102 aa).

The protein belongs to the V-ATPase F subunit family. Has multiple subunits with at least A(3), B(3), C, D, E, F, H, I and proteolipid K(x).

Its subcellular location is the cell membrane. In terms of biological role, component of the A-type ATP synthase that produces ATP from ADP in the presence of a proton gradient across the membrane. This is A-type ATP synthase subunit F from Thermococcus onnurineus (strain NA1).